Here is a 304-residue protein sequence, read N- to C-terminus: Virulence protein VirA (304 aa).

Its function is as follows. Could be involved in the biosynthesis of a major surface antigen important for virulence. This Vibrio anguillarum (strain ATCC 68554 / 775) (Listonella anguillarum) protein is Virulence protein VirA (virA).